The sequence spans 490 residues: Protein nucleotidyltransferase YdiU (490 aa).

ATP is bound by residues Gly94, Gly96, Arg97, Lys117, Asp129, Gly130, Arg180, and Arg187. Asp256 functions as the Proton acceptor in the catalytic mechanism. Mg(2+) is bound by residues Asn257 and Asp266. Asp266 lines the ATP pocket.

This sequence belongs to the SELO family. Mg(2+) is required as a cofactor. It depends on Mn(2+) as a cofactor.

It carries out the reaction L-seryl-[protein] + ATP = 3-O-(5'-adenylyl)-L-seryl-[protein] + diphosphate. It catalyses the reaction L-threonyl-[protein] + ATP = 3-O-(5'-adenylyl)-L-threonyl-[protein] + diphosphate. The enzyme catalyses L-tyrosyl-[protein] + ATP = O-(5'-adenylyl)-L-tyrosyl-[protein] + diphosphate. The catalysed reaction is L-histidyl-[protein] + UTP = N(tele)-(5'-uridylyl)-L-histidyl-[protein] + diphosphate. It carries out the reaction L-seryl-[protein] + UTP = O-(5'-uridylyl)-L-seryl-[protein] + diphosphate. It catalyses the reaction L-tyrosyl-[protein] + UTP = O-(5'-uridylyl)-L-tyrosyl-[protein] + diphosphate. Its function is as follows. Nucleotidyltransferase involved in the post-translational modification of proteins. It can catalyze the addition of adenosine monophosphate (AMP) or uridine monophosphate (UMP) to a protein, resulting in modifications known as AMPylation and UMPylation. In Clostridium perfringens (strain 13 / Type A), this protein is Protein nucleotidyltransferase YdiU.